Consider the following 1692-residue polypeptide: Flagellar attachment zone protein 1 (1692 aa).

3 coiled-coil regions span residues Arg613–Lys657, Val684–Arg864, and Asn903–Glu1607. 37 repeat units span residues Glu1012–Ala1025, Glu1026–Ala1039, Glu1040–Ala1053, Glu1054–Ala1067, Glu1068–Ala1081, Glu1082–Ala1095, Glu1096–Ala1109, Glu1110–Ala1123, Glu1124–Ala1137, Glu1138–Ala1151, Glu1152–Ala1165, Glu1166–Ala1179, Glu1180–Ala1193, Glu1194–Ala1207, Glu1208–Ala1221, Glu1222–Ala1235, Glu1236–Ala1249, Glu1250–Ala1263, Glu1264–Ala1277, Glu1278–Ala1291, Glu1292–Ala1305, Glu1306–Ala1319, Glu1320–Ala1333, Glu1334–Ala1347, Glu1348–Ala1361, Glu1362–Ala1375, Glu1376–Ala1389, Glu1390–Ala1403, Glu1404–Ala1417, Glu1418–Ala1431, Glu1432–Ala1445, Glu1446–Ala1459, Glu1460–Ala1473, Glu1474–Ala1487, Glu1488–Ala1501, Glu1502–Ala1515, and Glu1516–Ala1529. A 37 X 14 AA tandem repeats of E-E-L-E-L-K-[VA]-A-E-N-E-K-L-A region spans residues Glu1012–Ala1529.

The protein resides in the cell projection. It is found in the cilium. The protein localises to the flagellum. Functionally, a component of FAZ filament that is required for correct FAZ assembly and attachment. Not essential for new flagellum growth. The chain is Flagellar attachment zone protein 1 from Trypanosoma brucei brucei (strain 927/4 GUTat10.1).